The following is a 187-amino-acid chain: Large ribosomal subunit protein mL49 (187 aa).

It belongs to the mitochondrion-specific ribosomal protein mL49 family.

The protein resides in the mitochondrion. This chain is Large ribosomal subunit protein mL49 (mrpl-49), found in Caenorhabditis elegans.